The chain runs to 450 residues: Glutamate--tRNA ligase 2 (450 aa).

Residues 10 to 20 carry the 'HIGH' region motif; it reads PSPTGRIHIGN. The short motif at 243-247 is the 'KMSKS' region element; sequence GFSKR. Lys246 lines the ATP pocket.

The protein belongs to the class-I aminoacyl-tRNA synthetase family. Glutamate--tRNA ligase type 1 subfamily. Monomer.

The protein localises to the cytoplasm. It catalyses the reaction tRNA(Glu) + L-glutamate + ATP = L-glutamyl-tRNA(Glu) + AMP + diphosphate. Its function is as follows. Catalyzes the attachment of glutamate to tRNA(Glu) in a two-step reaction: glutamate is first activated by ATP to form Glu-AMP and then transferred to the acceptor end of tRNA(Glu). The chain is Glutamate--tRNA ligase 2 from Beijerinckia indica subsp. indica (strain ATCC 9039 / DSM 1715 / NCIMB 8712).